We begin with the raw amino-acid sequence, 384 residues long: Flap endonuclease 1 (384 aa).

The N-domain stretch occupies residues 1–105 (MGVKGLNQLI…GELEKRLLKR (105 aa)). Residue aspartate 34 coordinates Mg(2+). DNA is bound by residues arginine 47 and arginine 71. The Mg(2+) site is built by aspartate 87, glutamate 159, glutamate 161, aspartate 180, and aspartate 182. Residues 123–254 (DMTKYQKRLV…VTAYKLIKEH (132 aa)) are I-domain. Position 159 (glutamate 159) interacts with DNA. The DNA site is built by glycine 232 and aspartate 234. Mg(2+) is bound at residue aspartate 234. Residues 341-349 (IQGRLDGFF) form an interaction with PCNA region. The interval 354 to 384 (KYSNTSPLGKDDKKRKTNDKKGAAAKKTKRR) is disordered. Positions 362–375 (GKDDKKRKTNDKKG) are enriched in basic and acidic residues.

This sequence belongs to the XPG/RAD2 endonuclease family. FEN1 subfamily. Interacts with PCNA. Three molecules of FEN1 bind to one PCNA trimer with each molecule binding to one PCNA monomer. PCNA stimulates the nuclease activity without altering cleavage specificity. Mg(2+) is required as a cofactor. In terms of processing, phosphorylated. Phosphorylation upon DNA damage induces relocalization to the nuclear plasma.

It localises to the nucleus. The protein localises to the nucleolus. It is found in the nucleoplasm. Its subcellular location is the mitochondrion. In terms of biological role, structure-specific nuclease with 5'-flap endonuclease and 5'-3' exonuclease activities involved in DNA replication and repair. During DNA replication, cleaves the 5'-overhanging flap structure that is generated by displacement synthesis when DNA polymerase encounters the 5'-end of a downstream Okazaki fragment. It enters the flap from the 5'-end and then tracks to cleave the flap base, leaving a nick for ligation. Also involved in the long patch base excision repair (LP-BER) pathway, by cleaving within the apurinic/apyrimidinic (AP) site-terminated flap. Acts as a genome stabilization factor that prevents flaps from equilibrating into structures that lead to duplications and deletions. Also possesses 5'-3' exonuclease activity on nicked or gapped double-stranded DNA, and exhibits RNase H activity. Also involved in replication and repair of rDNA and in repairing mitochondrial DNA. This Lodderomyces elongisporus (strain ATCC 11503 / CBS 2605 / JCM 1781 / NBRC 1676 / NRRL YB-4239) (Yeast) protein is Flap endonuclease 1.